We begin with the raw amino-acid sequence, 137 residues long: Large ribosomal subunit protein uL16 (137 aa).

This sequence belongs to the universal ribosomal protein uL16 family. Part of the 50S ribosomal subunit.

Its function is as follows. Binds 23S rRNA and is also seen to make contacts with the A and possibly P site tRNAs. The sequence is that of Large ribosomal subunit protein uL16 from Azorhizobium caulinodans (strain ATCC 43989 / DSM 5975 / JCM 20966 / LMG 6465 / NBRC 14845 / NCIMB 13405 / ORS 571).